A 151-amino-acid polypeptide reads, in one-letter code: MESSSSTFLTTTSLDKKKPSPVSRKSPKQKKKTTSTNKPIKVRYISNPMRVQTCASKFRELVQELTGQDAVDLQPEPIYSPSSDDHNLSPPAENLAPRVLHQEPFGERDSDCYEPLNAEDMFLPDQMSAGFSGFFSNGFYNVNDFGSIDSM.

The span at 1 to 13 (MESSSSTFLTTTS) shows a compositional bias: low complexity. Disordered stretches follow at residues 1-41 (MESS…KPIK) and 66-93 (TGQD…PPAE). The N-terminal 54 residues, 1 to 54 (MESSSSTFLTTTSLDKKKPSPVSRKSPKQKKKTTSTNKPIKVRYISNPMRVQTC), are a transit peptide targeting the chloroplast. Residues 16–32 (KKKPSPVSRKSPKQKKK) carry the Bipartite nuclear localization signal motif. The short motif at 58-67 (FRELVQELTG) is the VQ element.

As to quaternary structure, interacts with the sigma factor SIGA in chloroplast. Interacts with WRKY25 and WRKY33 in the nucleus. As to expression, expressed in leaves and roots, but not in flowers.

The protein localises to the plastid. The protein resides in the chloroplast. It localises to the nucleus. Its function is as follows. Contributes to plant defense. May regulate chloroplast metabolism upon infection with pathogens such as Pseudomonas syringae. Functions as activator of WRKY33 in plant defense against necrotrophic pathogens by stimulating the DNA-binding activity of WRKY33. The sequence is that of Sigma factor binding protein 1, chloroplastic (SIB1) from Arabidopsis thaliana (Mouse-ear cress).